A 435-amino-acid chain; its full sequence is 3-phosphoshikimate 1-carboxyvinyltransferase (435 aa).

Lys-23, Ser-24, and Arg-28 together coordinate 3-phosphoshikimate. Lys-23 serves as a coordination point for phosphoenolpyruvate. Gly-96 and Arg-124 together coordinate phosphoenolpyruvate. 3-phosphoshikimate is bound by residues Ser-167, Ser-168, Gln-169, Ser-196, Glu-311, and His-340. Phosphoenolpyruvate is bound at residue Gln-169. The active-site Proton acceptor is Glu-311. 3 residues coordinate phosphoenolpyruvate: Arg-344, Arg-385, and Lys-410.

The protein belongs to the EPSP synthase family. In terms of assembly, monomer.

It is found in the cytoplasm. It catalyses the reaction 3-phosphoshikimate + phosphoenolpyruvate = 5-O-(1-carboxyvinyl)-3-phosphoshikimate + phosphate. Its pathway is metabolic intermediate biosynthesis; chorismate biosynthesis; chorismate from D-erythrose 4-phosphate and phosphoenolpyruvate: step 6/7. Catalyzes the transfer of the enolpyruvyl moiety of phosphoenolpyruvate (PEP) to the 5-hydroxyl of shikimate-3-phosphate (S3P) to produce enolpyruvyl shikimate-3-phosphate and inorganic phosphate. The polypeptide is 3-phosphoshikimate 1-carboxyvinyltransferase (Mycolicibacterium paratuberculosis (strain ATCC BAA-968 / K-10) (Mycobacterium paratuberculosis)).